The chain runs to 66 residues: Photosystem II reaction center protein J (66 aa).

A helical membrane pass occupies residues 37–57 (LWLVATAGGMAVIFVVGLFFY).

This sequence belongs to the PsbJ family. In terms of assembly, PSII is composed of 1 copy each of membrane proteins PsbA, PsbB, PsbC, PsbD, PsbE, PsbF, PsbH, PsbI, PsbJ, PsbK, PsbL, PsbM, PsbT, PsbX, PsbY, PsbZ, Psb30/Ycf12, peripheral proteins PsbO, CyanoQ (PsbQ), PsbU, PsbV and a large number of cofactors. It forms dimeric complexes.

It is found in the cellular thylakoid membrane. One of the components of the core complex of photosystem II (PSII). PSII is a light-driven water:plastoquinone oxidoreductase that uses light energy to abstract electrons from H(2)O, generating O(2) and a proton gradient subsequently used for ATP formation. It consists of a core antenna complex that captures photons, and an electron transfer chain that converts photonic excitation into a charge separation. The polypeptide is Photosystem II reaction center protein J (Synechococcus sp. (strain CC9311)).